Reading from the N-terminus, the 381-residue chain is Gas vesicle protein C (381 aa).

A run of 7 repeats spans residues 22–59 (QAFA…NSTN), 60–84 (DAFR…ADRR), 85–122 (DAFD…DETH), 123–160 (EAFD…VSVQ), 161–192 (GEFN…KDVA), 193–232 (DAFL…ETTE), and 233–274 (EAFA…IPPI). The tract at residues 22-274 (QAFAAYADEF…TETEVDIPPI (253 aa)) is 7 X approximate tandem repeats. The tract at residues 261-333 (AVTGTETEVD…EDDQFLDDET (73 aa)) is disordered. The segment covering 276-318 (DSVEPDGEDEDSKADDVEAEAEVETVEMEFGAEMDTEADEDVQ) has biased composition (acidic residues).

It belongs to the halobacterial gas vesicle GvpC family. Detected as 2 slightly different sizes in vivo; the proteins appears larger in SDS-PAGE probably due to the acidic tail.

The protein localises to the gas vesicle. In terms of biological role, confers stability, involved in shaping gas vesicles (GV), hollow, gas filled proteinaceous nanostructures found in some microorganisms. They allow positioning of halobacteria at the optimal depth for growth in the poorly aerated, shallow brine pools of their habitat. Functionally, expression of a 9.5 kb mc-vac DNA fragment containing 2 divergently transcribed regions (gvpD-gvpE-gvpF-gvpG-gvpH-gvpI-gvpJ-gvpK-gvpL-gvpM and gvpA-gvpC-gvpN-gvpO) allows H.volcanii to produce gas vesicles. This Haloferax mediterranei (strain ATCC 33500 / DSM 1411 / JCM 8866 / NBRC 14739 / NCIMB 2177 / R-4) (Halobacterium mediterranei) protein is Gas vesicle protein C.